We begin with the raw amino-acid sequence, 502 residues long: MVMTTAAASSPRTYQVRTYGCQMNVHDSERIAGLLEQAGYLRAGDADDVPDVVVFNTCAVRENADNRLYGNLGQLRPSKDRHPGMQIAVGGCLAQKDRSEIVRRAPWVDVVFGTHNIGSLPVLLERARHNAAAEVEILESLDVFPSTLPTRRESTYAGWVSISVGCNNTCTFCIVPALRGKERDRRPGDVLSEVRALVDEGVLEVTLLGQNVNSYGIEFGDRYAFGKLLRACGDIDGLERVRFTSPHPKDFTDDVIAAMAETPNVCHSLHMPLQSGSDDVLRAMRRSYRSERYLGIIEKVRAAMPDAAITTDIIVGFPGETEADFERTLDVVRSARFSSAFTFQYSKRPGTPAATMADQLPKPVVQERYERLVACVEEITWAENRRLVGETVEVLVAVGEGRKDERTGRLSGRARDGRLVHFDAGSLAGQIRPGDVVHTTVTYAAPHHLNADGEPLAHRRTPAGDAAEAGRRPRTAGVSLGLPTVGAPPSPVPPAASSACAC.

Residues 12 to 129 (RTYQVRTYGC…LPVLLERARH (118 aa)) form the MTTase N-terminal domain. Residues C21, C58, C92, C166, C170, and C173 each contribute to the [4Fe-4S] cluster site. One can recognise a Radical SAM core domain in the interval 152–383 (RESTYAGWVS…ACVEEITWAE (232 aa)). Residues 385–455 (RRLVGETVEV…PHHLNADGEP (71 aa)) form the TRAM domain. Residues 451–502 (ADGEPLAHRRTPAGDAAEAGRRPRTAGVSLGLPTVGAPPSPVPPAASSACAC) are disordered.

The protein belongs to the methylthiotransferase family. MiaB subfamily. As to quaternary structure, monomer. [4Fe-4S] cluster serves as cofactor.

Its subcellular location is the cytoplasm. It carries out the reaction N(6)-dimethylallyladenosine(37) in tRNA + (sulfur carrier)-SH + AH2 + 2 S-adenosyl-L-methionine = 2-methylsulfanyl-N(6)-dimethylallyladenosine(37) in tRNA + (sulfur carrier)-H + 5'-deoxyadenosine + L-methionine + A + S-adenosyl-L-homocysteine + 2 H(+). Functionally, catalyzes the methylthiolation of N6-(dimethylallyl)adenosine (i(6)A), leading to the formation of 2-methylthio-N6-(dimethylallyl)adenosine (ms(2)i(6)A) at position 37 in tRNAs that read codons beginning with uridine. The chain is tRNA-2-methylthio-N(6)-dimethylallyladenosine synthase from Salinispora arenicola (strain CNS-205).